Consider the following 529-residue polypeptide: Phospholipase A1-Igamma2, chloroplastic (529 aa).

The transit peptide at Met-1 to Arg-43 directs the protein to the chloroplast. The GXSXG motif lies at Gly-316–Gly-320. The Acyl-ester intermediate role is filled by Ser-318. Residues Asp-381 and His-437 each act as charge relay system in the active site.

Belongs to the AB hydrolase superfamily. Lipase family. Interacts with SBP1. Widely expressed. Highly expressed in leaves and stems.

It is found in the plastid. The protein localises to the chloroplast. It catalyses the reaction 1,2-dihexadecanoyl-sn-glycero-3-phosphocholine + H2O = 2-hexadecanoyl-sn-glycero-3-phosphocholine + hexadecanoate + H(+). The enzyme catalyses a 1,2-diacyl-3-O-(beta-D-galactosyl)-sn-glycerol + H2O = an acyl-3-O-(beta-D-galactosyl)-sn-glycerol + a fatty acid + H(+). It carries out the reaction a 1,2-diacyl-3-O-[alpha-D-galactosyl-(1-&gt;6)-beta-D-galactosyl]-sn-glycerol + H2O = acyl-3-O-[alpha-D-galactosyl-(1-&gt;6)-beta-D-galactosyl]-sn-glycerol + a fatty acid + H(+). The catalysed reaction is a triacylglycerol + H2O = a diacylglycerol + a fatty acid + H(+). Acylhydrolase with broad specificity. Catalyzes the hydrolysis of phosphatidylcholine at the sn-1 position. Possesses moderate activity toward phosphatidylcholine (PC), monogalactosyldiacylglycerol (MGDG), digalactosyldiacylglycerol (DGDG) and triacylglycerol (TAG). This is Phospholipase A1-Igamma2, chloroplastic from Arabidopsis thaliana (Mouse-ear cress).